Reading from the N-terminus, the 453-residue chain is MLLIKRYLMDPESLRRQIMNVYKCYMWKRAFHSNRSLLEVKRREKSLQRKILERILRPKEENAVKKSGFKLWSSHLNNPHKTYMRLEELQRRIMEEVHVEGIKKNDKLFNEINQWHFQNENTSTVRTPTLLIHGYAASSMSFFRNYPGLSKHIRNLYSIDMPASGLSSVPSLEINTTTPLPLDIKFIGENKFKVPYTINANHNKFVIQMYEDFYLDRIEQWRIDNKLGKMNVVGHSFGGYLSFKYAVKYPNSVNKLCLVSPLGVERNIWSVNNNFHSNTLYTIDFKNPNSKFYSKRNMIPKYLFEQQFHILRMMGPLGAKLCWNYIMAAYSRVPSLAYKEYIFELFYGKGGIPEVTTDIFKALFSRCILAKDPLMDSLQYLNVKKLLIVYGQYDWMNKKAGMFMVKELNNLKNCLEGASYLEIPSSGHNLFLDNPESFNQSIVSFLSDETKSP.

Residues 130–435 enclose the AB hydrolase-1 domain; it reads LLIHGYAASS…SGHNLFLDNP (306 aa). Positions 428–433 match the HXXXXD motif motif; sequence HNLFLD.

This sequence belongs to the peptidase S33 family. ABHD4/ABHD5 subfamily.

It is found in the mitochondrion. Functionally, may be involved in cell wall organization and biogenesis. This chain is Protein ECM18 (ECM18), found in Saccharomyces cerevisiae (strain ATCC 204508 / S288c) (Baker's yeast).